The following is a 302-amino-acid chain: Probable proteasome inhibitor (302 aa).

Position 2 is an N-acetylalanine (A2). Disordered regions lie at residues 151-188 and 259-302; these read LDGK…QIHP and ARFD…SDFI. Residues 259 to 269 are compositionally biased toward pro residues; sequence ARFDPYGPPGV.

It belongs to the proteasome inhibitor PI31 family.

Functionally, could play an important role in control of proteasome function. Inhibits the hydrolysis of protein and peptide substrates by the 20S proteasome. In Arabidopsis thaliana (Mouse-ear cress), this protein is Probable proteasome inhibitor.